The primary structure comprises 664 residues: Methionine--tRNA ligase (664 aa).

A 'HIGH' region motif is present at residues 13-23 (PYTNGPCHIGH). 4 residues coordinate Zn(2+): cysteine 144, cysteine 147, cysteine 156, and cysteine 160. The 'KMSKS' region signature appears at 327–331 (KFSKS). Lysine 330 contacts ATP. Residues 566–664 (EFGNLDIRIA…RPVKPGTKIR (99 aa)) enclose the tRNA-binding domain.

Belongs to the class-I aminoacyl-tRNA synthetase family. MetG type 1 subfamily. In terms of assembly, homodimer. Zn(2+) serves as cofactor.

It is found in the cytoplasm. The enzyme catalyses tRNA(Met) + L-methionine + ATP = L-methionyl-tRNA(Met) + AMP + diphosphate. Is required not only for elongation of protein synthesis but also for the initiation of all mRNA translation through initiator tRNA(fMet) aminoacylation. The sequence is that of Methionine--tRNA ligase from Methanoculleus marisnigri (strain ATCC 35101 / DSM 1498 / JR1).